Here is a 277-residue protein sequence, read N- to C-terminus: Raffinose operon transcriptional regulatory protein RafR (277 aa).

An HTH araC/xylS-type domain is found at 176–274 (NLAVSYLQEN…GASPSYYRKS (99 aa)). DNA-binding regions (H-T-H motif) lie at residues 193-214 (MDLC…KTHA) and 241-264 (VQSI…KRYS).

Its function is as follows. Involved in the regulation of the raffinose-operon. The protein is Raffinose operon transcriptional regulatory protein RafR (rafR) of Pediococcus pentosaceus.